Consider the following 144-residue polypeptide: Large-conductance mechanosensitive channel (144 aa).

2 helical membrane-spanning segments follow: residues 16–36 and 86–106; these read VIDL…VDSV and GNFL…FLMV.

The protein belongs to the MscL family. Homopentamer.

The protein localises to the cell inner membrane. Functionally, channel that opens in response to stretch forces in the membrane lipid bilayer. May participate in the regulation of osmotic pressure changes within the cell. The polypeptide is Large-conductance mechanosensitive channel (Cupriavidus pinatubonensis (strain JMP 134 / LMG 1197) (Cupriavidus necator (strain JMP 134))).